Here is a 295-residue protein sequence, read N- to C-terminus: GTPase Era (295 aa).

In terms of domain architecture, Era-type G spans 4–171; it reads KSGFVTIIGR…INLIVQYLPE (168 aa). The segment at 12–19 is G1; sequence GRPNVGKS. GTP is bound at residue 12-19; sequence GRPNVGKS. The G2 stretch occupies residues 38–42; that stretch reads QTTRN. Residues 59–62 are G3; it reads DTPG. Residues 59 to 63 and 121 to 124 each bind GTP; these read DTPGI and NKID. The G4 stretch occupies residues 121-124; it reads NKID. The segment at 150-152 is G5; that stretch reads ISA. One can recognise a KH type-2 domain in the interval 194-280; it reads IREKILHYTD…YLELWVKVKE (87 aa).

The protein belongs to the TRAFAC class TrmE-Era-EngA-EngB-Septin-like GTPase superfamily. Era GTPase family. As to quaternary structure, monomer.

The protein resides in the cytoplasm. It localises to the cell membrane. In terms of biological role, an essential GTPase that binds both GDP and GTP, with rapid nucleotide exchange. Plays a role in 16S rRNA processing and 30S ribosomal subunit biogenesis and possibly also in cell cycle regulation and energy metabolism. In Alkaliphilus oremlandii (strain OhILAs) (Clostridium oremlandii (strain OhILAs)), this protein is GTPase Era.